The sequence spans 423 residues: Glutamine synthetase, chloroplastic (423 aa).

A chloroplast-targeting transit peptide spans 1–51; sequence MAQAVVPAMQCRVGVKAAAGRVWSAGRTRTGRGGASPGFKVMAVSTGSTGV. Residues 70–150 form the GS beta-grasp domain; sequence VIAEYIWVGG…VICDTYTPQG (81 aa). Residues 89–115 form a disordered region; the sequence is RTISKPVEDPSELPKWNYDGSSTGQAP. Residues 154–423 form the GS catalytic domain; that stretch reads PTNKRHRAAQ…LAAKKLALKV (270 aa).

It belongs to the glutamine synthetase family. Homooctamer.

Its subcellular location is the plastid. The protein resides in the chloroplast. The enzyme catalyses L-glutamate + NH4(+) + ATP = L-glutamine + ADP + phosphate + H(+). Functionally, the light-modulated chloroplast enzyme, encoded by a nuclear gene and expressed primarily in leaves, is responsible for the reassimilation of the ammonia generated by photorespiration. The sequence is that of Glutamine synthetase, chloroplastic (GLN2) from Zea mays (Maize).